Reading from the N-terminus, the 510-residue chain is NAD(P)H-quinone oxidoreductase subunit 2 A, chloroplastic (510 aa).

Helical transmembrane passes span 24-44 (LLLF…GLIL), 57-77 (IPWL…ALLF), 99-119 (IFQF…VEYI), 124-144 (MAIT…MFLC), 149-169 (LITI…LSGY), 183-203 (YLLM…WLYG), 227-247 (PGIS…LSPA), 295-315 (WHLL…LIAI), 323-343 (MLAY…IVGD), 354-374 (YMLF…LFGL), 395-415 (ALSL…AGFF), 418-438 (LYLF…IGLL), and 484-504 (MIVC…IIAI).

It belongs to the complex I subunit 2 family. NDH is composed of at least 16 different subunits, 5 of which are encoded in the nucleus.

The protein localises to the plastid. It is found in the chloroplast thylakoid membrane. The catalysed reaction is a plastoquinone + NADH + (n+1) H(+)(in) = a plastoquinol + NAD(+) + n H(+)(out). The enzyme catalyses a plastoquinone + NADPH + (n+1) H(+)(in) = a plastoquinol + NADP(+) + n H(+)(out). Functionally, NDH shuttles electrons from NAD(P)H:plastoquinone, via FMN and iron-sulfur (Fe-S) centers, to quinones in the photosynthetic chain and possibly in a chloroplast respiratory chain. The immediate electron acceptor for the enzyme in this species is believed to be plastoquinone. Couples the redox reaction to proton translocation, and thus conserves the redox energy in a proton gradient. The sequence is that of NAD(P)H-quinone oxidoreductase subunit 2 A, chloroplastic from Solanum lycopersicum (Tomato).